The following is a 317-amino-acid chain: Porphobilinogen deaminase (317 aa).

Cysteine 242 bears the S-(dipyrrolylmethanemethyl)cysteine mark.

The protein belongs to the HMBS family. In terms of assembly, monomer. Dipyrromethane serves as cofactor.

The enzyme catalyses 4 porphobilinogen + H2O = hydroxymethylbilane + 4 NH4(+). The protein operates within porphyrin-containing compound metabolism; protoporphyrin-IX biosynthesis; coproporphyrinogen-III from 5-aminolevulinate: step 2/4. In terms of biological role, tetrapolymerization of the monopyrrole PBG into the hydroxymethylbilane pre-uroporphyrinogen in several discrete steps. This is Porphobilinogen deaminase from Colwellia psychrerythraea (strain 34H / ATCC BAA-681) (Vibrio psychroerythus).